Here is a 433-residue protein sequence, read N- to C-terminus: Mblk-1-related factor 1 (433 aa).

The 53-residue stretch at 145-197 (NKSNILRRNYTVEDLTQAVEDIRQGKLGTRRASVVYGIPRSTLRNKIYKLEAE) folds into the HTH psq-type 1 domain. A DNA-binding region (H-T-H motif) is located at residues 173–193 (TRRASVVYGIPRSTLRNKIYK). Residues 235–254 (GNQSDSSSSSPHASMCPSSP) are compositionally biased toward low complexity. Disordered regions lie at residues 235–278 (GNQS…SCSP) and 304–338 (ANISNVDTHTPTPISEKSQKMHGNEEWKRSRPKRG). Positions 304–319 (ANISNVDTHTPTPISE) are enriched in polar residues. Positions 320-332 (KSQKMHGNEEWKR) are enriched in basic and acidic residues. In terms of domain architecture, HTH psq-type 2 spans 334 to 386 (RPKRGQYRKYDKNALDEAVRSVRRGEMTVHRAGSFFGVPHSTLEYKVKERNLM). A DNA-binding region (H-T-H motif) is located at residues 362–382 (VHRAGSFFGVPHSTLEYKVKE). The segment at 393–433 (LYSHDSSTSEDGSQLVTSTISEKSDSSSHTSTPIPFPISLV) is disordered. Residues 396–408 (HDSSTSEDGSQLV) show a composition bias toward polar residues. Residues 409 to 424 (TSTISEKSDSSSHTST) show a composition bias toward low complexity.

In terms of tissue distribution, expressed in AIM, RIC, AIZ, ADF, ADL, ASK, AWA, AUA, AIN, RIH (or RIR) and RIF head neurons and, in PVP, PVQ and DVA (or DVC) tail neurons, some intestinal cells, somatic gonad and vulva.

It localises to the nucleus. May act as transcription activator. Plays a role in neurogenesis by regulating neurite pruning between left and right AIM neurons and left and right RIF neurons during larval development. Regulates olfactory plasticity. This Caenorhabditis elegans protein is Mblk-1-related factor 1.